The sequence spans 246 residues: DNA polymerase sliding clamp (246 aa).

Belongs to the PCNA family. In terms of assembly, homotrimer. The subunits circularize to form a toroid; DNA passes through its center. Replication factor C (RFC) is required to load the toroid on the DNA.

Functionally, sliding clamp subunit that acts as a moving platform for DNA processing. Responsible for tethering the catalytic subunit of DNA polymerase and other proteins to DNA during high-speed replication. The sequence is that of DNA polymerase sliding clamp from Thermoplasma volcanium (strain ATCC 51530 / DSM 4299 / JCM 9571 / NBRC 15438 / GSS1).